Consider the following 343-residue polypeptide: Protein RecA (343 aa).

66–73 is a binding site for ATP; sequence GPESSGKT.

It belongs to the RecA family.

Its subcellular location is the cytoplasm. Can catalyze the hydrolysis of ATP in the presence of single-stranded DNA, the ATP-dependent uptake of single-stranded DNA by duplex DNA, and the ATP-dependent hybridization of homologous single-stranded DNAs. It interacts with LexA causing its activation and leading to its autocatalytic cleavage. The protein is Protein RecA of Rickettsia conorii (strain ATCC VR-613 / Malish 7).